The primary structure comprises 243 residues: Type III pantothenate kinase (243 aa).

6-13 contributes to the ATP binding site; sequence DIGNTNLK. 101-104 is a substrate binding site; it reads GSDI. Asp-103 functions as the Proton acceptor in the catalytic mechanism. An ATP-binding site is contributed by Thr-125. Residue Thr-176 participates in substrate binding.

The protein belongs to the type III pantothenate kinase family. Homodimer. NH4(+) is required as a cofactor. It depends on K(+) as a cofactor.

It localises to the cytoplasm. It carries out the reaction (R)-pantothenate + ATP = (R)-4'-phosphopantothenate + ADP + H(+). It functions in the pathway cofactor biosynthesis; coenzyme A biosynthesis; CoA from (R)-pantothenate: step 1/5. Its function is as follows. Catalyzes the phosphorylation of pantothenate (Pan), the first step in CoA biosynthesis. The sequence is that of Type III pantothenate kinase from Mycoplasma mobile (strain ATCC 43663 / 163K / NCTC 11711) (Mesomycoplasma mobile).